The following is a 106-amino-acid chain: MNKIRKGDEVIVLTGRDKGKRGTVSLRKDDSHLVIEGINLVKKHVKPNPMKGTTGGIVEKAMPIHQSNVAIFNAATGKADRVGIKVQADGTRVRVFKSSGAEIKAA.

This sequence belongs to the universal ribosomal protein uL24 family. As to quaternary structure, part of the 50S ribosomal subunit.

One of two assembly initiator proteins, it binds directly to the 5'-end of the 23S rRNA, where it nucleates assembly of the 50S subunit. Its function is as follows. One of the proteins that surrounds the polypeptide exit tunnel on the outside of the subunit. The chain is Large ribosomal subunit protein uL24 from Acidovorax sp. (strain JS42).